We begin with the raw amino-acid sequence, 192 residues long: MAEHGLKIAVVGPQRTGKTLLCRALAEQPILLGEMSYQPTAAVRIQEISRVLGIDRVKVQFWDVSGSVQYQSYWPVLAKEVDGLLMVIDPNRPEQERDLETFYRNFAEPNNLYTRQCMVMAIQVQKEGGGLGGWQGLQGGLKKLSQSYVAINPANPAAGVQEAYSHLDVLFQGALQSKKEALESSYMNQEDQ.

GTP is bound by residues 12–19 (GPQRTGKT) and 62–69 (WDVSGSVQ).

It belongs to the small GTPase superfamily. Rab family. Component of the IFT complex B, composed of IFT88, IFT70, IFT52, IFT46, IFT27, IFT25 and IFT22.

It is found in the cell projection. It localises to the cilium. Its subcellular location is the flagellum. Component of the intraflagellar transport (IFT) complex B. Functions in regulating the cellular pool size of both complex A and complex B and thus plays a critical role in determining the cellular availability of IFT particles. The protein is Intraflagellar transport protein 22 (FAP9) of Chlamydomonas reinhardtii (Chlamydomonas smithii).